We begin with the raw amino-acid sequence, 60 residues long: Large ribosomal subunit protein bL32 (60 aa).

Residues 1–19 (MAVPKRRTSKRRKRARNTH) show a composition bias toward basic residues. Residues 1 to 20 (MAVPKRRTSKRRKRARNTHK) form a disordered region.

This sequence belongs to the bacterial ribosomal protein bL32 family.

The protein is Large ribosomal subunit protein bL32 of Gemmatimonas aurantiaca (strain DSM 14586 / JCM 11422 / NBRC 100505 / T-27).